The sequence spans 319 residues: Acetyl-coenzyme A carboxylase carboxyl transferase subunit alpha (319 aa).

Positions 35–296 (NIDEEVHRLR…KAQLLADLAD (262 aa)) constitute a CoA carboxyltransferase C-terminal domain.

It belongs to the AccA family. As to quaternary structure, acetyl-CoA carboxylase is a heterohexamer composed of biotin carboxyl carrier protein (AccB), biotin carboxylase (AccC) and two subunits each of ACCase subunit alpha (AccA) and ACCase subunit beta (AccD).

It localises to the cytoplasm. It carries out the reaction N(6)-carboxybiotinyl-L-lysyl-[protein] + acetyl-CoA = N(6)-biotinyl-L-lysyl-[protein] + malonyl-CoA. The protein operates within lipid metabolism; malonyl-CoA biosynthesis; malonyl-CoA from acetyl-CoA: step 1/1. Its function is as follows. Component of the acetyl coenzyme A carboxylase (ACC) complex. First, biotin carboxylase catalyzes the carboxylation of biotin on its carrier protein (BCCP) and then the CO(2) group is transferred by the carboxyltransferase to acetyl-CoA to form malonyl-CoA. In Escherichia coli O127:H6 (strain E2348/69 / EPEC), this protein is Acetyl-coenzyme A carboxylase carboxyl transferase subunit alpha.